A 266-amino-acid chain; its full sequence is tRNA pseudouridine synthase A (266 aa).

Asp56 acts as the Nucleophile in catalysis. Residue Tyr110 participates in substrate binding.

It belongs to the tRNA pseudouridine synthase TruA family.

The enzyme catalyses uridine(38/39/40) in tRNA = pseudouridine(38/39/40) in tRNA. Its function is as follows. Formation of pseudouridine at positions 38, 39 and 40 in the anticodon stem and loop of transfer RNAs. In Halobacterium salinarum (strain ATCC 29341 / DSM 671 / R1), this protein is tRNA pseudouridine synthase A.